A 528-amino-acid polypeptide reads, in one-letter code: Phosphoenolpyruvate carboxykinase (ATP) (528 aa).

The substrate site is built by R56, Y192, and K198. Residues K198, H217, and 233–241 (GLSGTGKTT) each bind ATP. Mn(2+) contacts are provided by K198 and H217. Mn(2+) is bound at residue D254. E282, R319, and T444 together coordinate ATP. Residue R319 coordinates substrate.

It belongs to the phosphoenolpyruvate carboxykinase (ATP) family. It depends on Mn(2+) as a cofactor.

It localises to the cytoplasm. It carries out the reaction oxaloacetate + ATP = phosphoenolpyruvate + ADP + CO2. The protein operates within carbohydrate biosynthesis; gluconeogenesis. Its function is as follows. Involved in the gluconeogenesis. Catalyzes the conversion of oxaloacetate (OAA) to phosphoenolpyruvate (PEP) through direct phosphoryl transfer between the nucleoside triphosphate and OAA. The chain is Phosphoenolpyruvate carboxykinase (ATP) from Bacillus pumilus (strain SAFR-032).